The following is a 310-amino-acid chain: Protease HtpX homolog (310 aa).

2 consecutive transmembrane segments (helical) span residues 7 to 27 (SVML…LIGG) and 29 to 49 (AGMT…YWYS). His131 provides a ligand contact to Zn(2+). The active site involves Glu132. His135 contributes to the Zn(2+) binding site. 2 helical membrane-spanning segments follow: residues 141–161 (ILIG…ASMA) and 178–198 (PLGF…AALI). Glu207 contributes to the Zn(2+) binding site. Positions 277 to 310 (LTGARPQSGGAPSGPERTARNAEDSAKDFWDSLK) are disordered. A compositionally biased stretch (basic and acidic residues) spans 293-310 (RTARNAEDSAKDFWDSLK).

It belongs to the peptidase M48B family. It depends on Zn(2+) as a cofactor.

Its subcellular location is the cell inner membrane. This Desulfatibacillum aliphaticivorans protein is Protease HtpX homolog.